The sequence spans 200 residues: Large ribosomal subunit protein uL4 (200 aa).

The segment at 38-68 (GRQGSKQQKTRSDVRGGGKRPWRQKGTGRAR) is disordered. A compositionally biased stretch (basic residues) spans 54 to 65 (GGKRPWRQKGTG).

The protein belongs to the universal ribosomal protein uL4 family. Part of the 50S ribosomal subunit.

Its function is as follows. One of the primary rRNA binding proteins, this protein initially binds near the 5'-end of the 23S rRNA. It is important during the early stages of 50S assembly. It makes multiple contacts with different domains of the 23S rRNA in the assembled 50S subunit and ribosome. Functionally, forms part of the polypeptide exit tunnel. The protein is Large ribosomal subunit protein uL4 of Pseudomonas syringae pv. tomato (strain ATCC BAA-871 / DC3000).